A 104-amino-acid chain; its full sequence is Large ribosomal subunit protein bL21 (104 aa).

Belongs to the bacterial ribosomal protein bL21 family. As to quaternary structure, part of the 50S ribosomal subunit. Contacts protein L20.

In terms of biological role, this protein binds to 23S rRNA in the presence of protein L20. The sequence is that of Large ribosomal subunit protein bL21 from Salinispora tropica (strain ATCC BAA-916 / DSM 44818 / JCM 13857 / NBRC 105044 / CNB-440).